Consider the following 439-residue polypeptide: Xylose isomerase (439 aa).

Active-site residues include histidine 101 and aspartate 104. Mg(2+)-binding residues include glutamate 232, glutamate 268, histidine 271, aspartate 296, aspartate 307, aspartate 309, and aspartate 339.

This sequence belongs to the xylose isomerase family. Homotetramer. Mg(2+) serves as cofactor.

The protein resides in the cytoplasm. The enzyme catalyses alpha-D-xylose = alpha-D-xylulofuranose. This Thermoanaerobacterium saccharolyticum protein is Xylose isomerase (xylA).